Consider the following 214-residue polypeptide: Ribosomal RNA small subunit methyltransferase G (214 aa).

S-adenosyl-L-methionine-binding positions include G81, M86, 132-133, and R147; that span reads VE.

This sequence belongs to the methyltransferase superfamily. RNA methyltransferase RsmG family.

It is found in the cytoplasm. It carries out the reaction guanosine(527) in 16S rRNA + S-adenosyl-L-methionine = N(7)-methylguanosine(527) in 16S rRNA + S-adenosyl-L-homocysteine. Its function is as follows. Specifically methylates the N7 position of guanine in position 527 of 16S rRNA. This Pseudomonas paraeruginosa (strain DSM 24068 / PA7) (Pseudomonas aeruginosa (strain PA7)) protein is Ribosomal RNA small subunit methyltransferase G.